We begin with the raw amino-acid sequence, 301 residues long: Aquaporin NIP2-3 (301 aa).

The next 2 membrane-spanning stretches (helical) occupy residues 57–77 (VISEVVATFLLVFVTCGAASI) and 91–111 (SVAGGLIVTVMIYATGHISGA). The NPA 1 motif lies at 114 to 116 (NPA). A run of 3 helical transmembrane segments spans residues 132-154 (VPFYWAAQFTGAMCAAFVLKAVL), 172-192 (ALAIEIVVTFNMMFVTCAVAT), and 200-220 (LAGLAVGSAVCITSIFAGPVS). The NPA 2 motif lies at 225 to 227 (NPA). The helical transmembrane segment at 238–258 (VFTGLWIYFLGPVVGTLSGAW) threads the bilayer.

This sequence belongs to the MIP/aquaporin (TC 1.A.8) family. NIP (TC 1.A.8.12) subfamily.

It localises to the membrane. Aquaporins facilitate the transport of water and small neutral solutes across cell membranes. The chain is Aquaporin NIP2-3 (NIP2-3) from Zea mays (Maize).